The primary structure comprises 89 residues: Neuropeptide S (89 aa).

The first 23 residues, 1-23, serve as a signal peptide directing secretion; sequence MIGSLKFNFILFLLISTMHMFWC. Positions 24–67 are excised as a propeptide; it reads HPISSSKVPGKSDYFVILLNSCPTRMDRRVGLDFLKPILEKTLM.

It localises to the secreted. Its function is as follows. Modulates arousal and anxiety. May play an important anorexigenic role. Binds to its receptor NPSR1 with nanomolar affinity to increase intracellular calcium concentrations. The sequence is that of Neuropeptide S (NPS) from Bos taurus (Bovine).